We begin with the raw amino-acid sequence, 344 residues long: Methionine import ATP-binding protein MetN 1 (344 aa).

Positions 2-241 (IEIRNLSQRF…PHHEVTRALI (240 aa)) constitute an ABC transporter domain. 38 to 45 (GRSGAGKS) contributes to the ATP binding site.

The protein belongs to the ABC transporter superfamily. Methionine importer (TC 3.A.1.24) family. The complex is composed of two ATP-binding proteins (MetN), two transmembrane proteins (MetI) and a solute-binding protein (MetQ).

The protein resides in the cell inner membrane. The enzyme catalyses L-methionine(out) + ATP + H2O = L-methionine(in) + ADP + phosphate + H(+). It carries out the reaction D-methionine(out) + ATP + H2O = D-methionine(in) + ADP + phosphate + H(+). Functionally, part of the ABC transporter complex MetNIQ involved in methionine import. Responsible for energy coupling to the transport system. In Burkholderia mallei (strain ATCC 23344), this protein is Methionine import ATP-binding protein MetN 1.